The primary structure comprises 131 residues: Leptin receptor gene-related protein (131 aa).

4 helical membrane passes run 7 to 27, 32 to 52, 69 to 89, and 100 to 120; these read LVALSFSGAIGLTFLMLGCAL, VYWPLFVLIFHAISPIPHFIA, LAYFFTTGIVVSAFGFPVILA, and GLVLAGNAVIFLTIQGFFLVF.

It belongs to the OB-RGRP/VPS55 family. Interacts with LEPR. Interacts with RAB13.

It localises to the golgi apparatus membrane. It is found in the endosome membrane. In terms of biological role, negatively regulates leptin receptor (LEPR) cell surface expression, and thus decreases response to leptin/LEP. Negatively regulates growth hormone (GH) receptor cell surface expression in liver. May play a role in liver resistance to GH during periods of reduced nutrient availability. The chain is Leptin receptor gene-related protein (LEPROT) from Bos taurus (Bovine).